The primary structure comprises 393 residues: NAD(P)H-quinone oxidoreductase subunit H, chloroplastic (393 aa).

Belongs to the complex I 49 kDa subunit family. NDH is composed of at least 16 different subunits, 5 of which are encoded in the nucleus.

It localises to the plastid. The protein resides in the chloroplast thylakoid membrane. It carries out the reaction a plastoquinone + NADH + (n+1) H(+)(in) = a plastoquinol + NAD(+) + n H(+)(out). The catalysed reaction is a plastoquinone + NADPH + (n+1) H(+)(in) = a plastoquinol + NADP(+) + n H(+)(out). In terms of biological role, NDH shuttles electrons from NAD(P)H:plastoquinone, via FMN and iron-sulfur (Fe-S) centers, to quinones in the photosynthetic chain and possibly in a chloroplast respiratory chain. The immediate electron acceptor for the enzyme in this species is believed to be plastoquinone. Couples the redox reaction to proton translocation, and thus conserves the redox energy in a proton gradient. The polypeptide is NAD(P)H-quinone oxidoreductase subunit H, chloroplastic (Lactuca sativa (Garden lettuce)).